Here is a 476-residue protein sequence, read N- to C-terminus: Serine--tRNA ligase (476 aa).

279-281 (TAE) provides a ligand contact to L-serine. Residue 310–312 (RAE) participates in ATP binding. Glu333 lines the L-serine pocket. 400 to 403 (EISS) contacts ATP. An L-serine-binding site is contributed by Ser435.

Belongs to the class-II aminoacyl-tRNA synthetase family. Type-1 seryl-tRNA synthetase subfamily. In terms of assembly, homodimer. The tRNA molecule binds across the dimer.

The protein localises to the cytoplasm. It carries out the reaction tRNA(Ser) + L-serine + ATP = L-seryl-tRNA(Ser) + AMP + diphosphate + H(+). The enzyme catalyses tRNA(Sec) + L-serine + ATP = L-seryl-tRNA(Sec) + AMP + diphosphate + H(+). It participates in aminoacyl-tRNA biosynthesis; selenocysteinyl-tRNA(Sec) biosynthesis; L-seryl-tRNA(Sec) from L-serine and tRNA(Sec): step 1/1. Catalyzes the attachment of serine to tRNA(Ser). Is also able to aminoacylate tRNA(Sec) with serine, to form the misacylated tRNA L-seryl-tRNA(Sec), which will be further converted into selenocysteinyl-tRNA(Sec). The polypeptide is Serine--tRNA ligase (Rhodopseudomonas palustris (strain BisA53)).